A 263-amino-acid polypeptide reads, in one-letter code: Small ribosomal subunit protein eS4, Y isoform 2 (263 aa).

The S4 RNA-binding domain maps to 42–104; that stretch reads LPLIVFLRNR…TGEHFRLVYD (63 aa).

Belongs to the eukaryotic ribosomal protein eS4 family.

In Pan troglodytes (Chimpanzee), this protein is Small ribosomal subunit protein eS4, Y isoform 2 (RPS4Y2).